A 124-amino-acid polypeptide reads, in one-letter code: Conotoxin Cl14.12 (124 aa).

A signal peptide spans 1 to 17 (MKVAVVLLVSLLAVTYA). Positions 18–74 (LPEKRIFFGGIVDKVKDTFTKIFNKAKETFDKITDGFDVDFDEVVDKLIAQIHSTPT) are excised as a propeptide.

In terms of processing, contains 2 disulfide bond. Expressed by the venom duct.

The protein resides in the secreted. The chain is Conotoxin Cl14.12 from Californiconus californicus (California cone).